We begin with the raw amino-acid sequence, 432 residues long: Enolase (432 aa).

Residue Gln167 coordinates (2R)-2-phosphoglycerate. Residue Glu209 is the Proton donor of the active site. Mg(2+) is bound by residues Asp246, Glu289, and Asp316. The (2R)-2-phosphoglycerate site is built by Lys341, Arg370, Ser371, and Lys392. Residue Lys341 is the Proton acceptor of the active site.

Belongs to the enolase family. Mg(2+) is required as a cofactor.

Its subcellular location is the cytoplasm. It localises to the secreted. The protein resides in the cell surface. It catalyses the reaction (2R)-2-phosphoglycerate = phosphoenolpyruvate + H2O. It participates in carbohydrate degradation; glycolysis; pyruvate from D-glyceraldehyde 3-phosphate: step 4/5. Catalyzes the reversible conversion of 2-phosphoglycerate (2-PG) into phosphoenolpyruvate (PEP). It is essential for the degradation of carbohydrates via glycolysis. The protein is Enolase of Thermotoga neapolitana (strain ATCC 49049 / DSM 4359 / NBRC 107923 / NS-E).